The chain runs to 228 residues: uncharacterized protein (228 aa).

This is an uncharacterized protein from Methanocaldococcus jannaschii (strain ATCC 43067 / DSM 2661 / JAL-1 / JCM 10045 / NBRC 100440) (Methanococcus jannaschii).